We begin with the raw amino-acid sequence, 132 residues long: HLA class I histocompatibility antigen protein P5 (132 aa).

As to expression, expressed in lymphoid tissues; Detected in spleen as well as in B-cell lines, NK cell lines and activated lymphocytes.

The polypeptide is HLA class I histocompatibility antigen protein P5 (HCP5) (Homo sapiens (Human)).